The sequence spans 206 residues: Probable N-acetyltransferase 14 (206 aa).

The region spanning 6 to 206 is the N-acetyltransferase domain; sequence LSVREMREDE…MLVREFSKDL (201 aa). A helical transmembrane segment spans residues 57-77; the sequence is FILASFALALLLPVFLAVAAV.

Belongs to the camello family.

It is found in the membrane. Functionally, probable acetyltransferase that binds the 5'-GGACTACAG-3' sequence of coproporphyrinogen oxidase promoter. Able to activate transcription of a reporter construct in vitro. In terms of biological role, probable acetyltransferase. Its function is as follows. May act as a transcription factor regulating the expression of coproporphyrinogen oxidase by binding to a promoter regulatory element. This chain is Probable N-acetyltransferase 14 (Nat14), found in Mus musculus (Mouse).